We begin with the raw amino-acid sequence, 302 residues long: Succinate--CoA ligase [ADP-forming] subunit alpha (302 aa).

CoA is bound by residues 17–20, Lys43, and 96–98; these read TGST and ITE. Tyr159 serves as a coordination point for substrate. His247 serves as the catalytic Tele-phosphohistidine intermediate.

The protein belongs to the succinate/malate CoA ligase alpha subunit family. As to quaternary structure, heterotetramer of two alpha and two beta subunits.

The enzyme catalyses succinate + ATP + CoA = succinyl-CoA + ADP + phosphate. The catalysed reaction is GTP + succinate + CoA = succinyl-CoA + GDP + phosphate. Its pathway is carbohydrate metabolism; tricarboxylic acid cycle; succinate from succinyl-CoA (ligase route): step 1/1. Functionally, succinyl-CoA synthetase functions in the citric acid cycle (TCA), coupling the hydrolysis of succinyl-CoA to the synthesis of either ATP or GTP and thus represents the only step of substrate-level phosphorylation in the TCA. The alpha subunit of the enzyme binds the substrates coenzyme A and phosphate, while succinate binding and nucleotide specificity is provided by the beta subunit. In Staphylococcus epidermidis (strain ATCC 35984 / DSM 28319 / BCRC 17069 / CCUG 31568 / BM 3577 / RP62A), this protein is Succinate--CoA ligase [ADP-forming] subunit alpha.